Consider the following 438-residue polypeptide: Putative cytochrome P450 140 (438 aa).

Cys-381 serves as a coordination point for heme.

Belongs to the cytochrome P450 family. Heme serves as cofactor.

The sequence is that of Putative cytochrome P450 140 (cyp140) from Mycobacterium bovis (strain ATCC BAA-935 / AF2122/97).